Consider the following 692-residue polypeptide: Elongation factor G (692 aa).

One can recognise a tr-type G domain in the interval 9–284 (HMVRNIGIAA…AVVDYLPAPD (276 aa)). Residues 18–25 (AHIDAGKT), 82–86 (DTPGH), and 136–139 (NKMD) contribute to the GTP site.

It belongs to the TRAFAC class translation factor GTPase superfamily. Classic translation factor GTPase family. EF-G/EF-2 subfamily.

It is found in the cytoplasm. Its function is as follows. Catalyzes the GTP-dependent ribosomal translocation step during translation elongation. During this step, the ribosome changes from the pre-translocational (PRE) to the post-translocational (POST) state as the newly formed A-site-bound peptidyl-tRNA and P-site-bound deacylated tRNA move to the P and E sites, respectively. Catalyzes the coordinated movement of the two tRNA molecules, the mRNA and conformational changes in the ribosome. This Campylobacter curvus (strain 525.92) protein is Elongation factor G.